Consider the following 210-residue polypeptide: MAIVLEAKERADKKRSTLHRIRSQGGIPAILYGKKVENKMIFVSTAELEKALREGGRTSLLTLKVGGEEHSVLLRELQRDPLRGHLLHADFQAVDMSTEVDIDVEVRLVGEAPGVKDGGVLQQNLHELSIRVLPANIPPVIEVDISGLQVGDTVTVGDVKTDGKFEINHEPSEVIATILPPQQEEEIDSGEQQEAGQPDAAEGRETTPEE.

The tract at residues 175 to 210 is disordered; sequence IATILPPQQEEEIDSGEQQEAGQPDAAEGRETTPEE. A compositionally biased stretch (basic and acidic residues) spans 201 to 210; it reads AEGRETTPEE.

The protein belongs to the bacterial ribosomal protein bL25 family. CTC subfamily. As to quaternary structure, part of the 50S ribosomal subunit; part of the 5S rRNA/L5/L18/L25 subcomplex. Contacts the 5S rRNA. Binds to the 5S rRNA independently of L5 and L18.

Functionally, this is one of the proteins that binds to the 5S RNA in the ribosome where it forms part of the central protuberance. This is Large ribosomal subunit protein bL25 from Geobacillus kaustophilus (strain HTA426).